Consider the following 1372-residue polypeptide: DNA-directed RNA polymerase subunit beta (1372 aa).

This sequence belongs to the RNA polymerase beta chain family. The RNAP catalytic core consists of 2 alpha, 1 beta, 1 beta' and 1 omega subunit. When a sigma factor is associated with the core the holoenzyme is formed, which can initiate transcription.

It catalyses the reaction RNA(n) + a ribonucleoside 5'-triphosphate = RNA(n+1) + diphosphate. In terms of biological role, DNA-dependent RNA polymerase catalyzes the transcription of DNA into RNA using the four ribonucleoside triphosphates as substrates. The sequence is that of DNA-directed RNA polymerase subunit beta from Psychrobacter sp. (strain PRwf-1).